Reading from the N-terminus, the 229-residue chain is Putative ABC transporter permease protein ORF1 (229 aa).

Positions 23-214 constitute an ABC transmembrane type-1 domain; it reads ALNSLLVALA…LPSLAFFALV (192 aa). Helical transmembrane passes span 27–47, 62–82, 91–111, 150–170, and 194–214; these read LLVALATAAVTVLIATPMAYV, WVVVSQAFPFVLLIIPLFLVL, LTGLVLVYVVWSLPFALWMLA, ATALFAFVTAWNEFFFALVLL, and SPAGAAAFLATLPSLAFFALV.

Belongs to the binding-protein-dependent transport system permease family. MalFG subfamily.

It localises to the cell membrane. In terms of biological role, may participate in oleandomycin secretion during antibiotic production. The chain is Putative ABC transporter permease protein ORF1 from Streptomyces antibioticus.